A 367-amino-acid chain; its full sequence is 3-dehydroquinate synthase (367 aa).

Residues 108–112 (GVIGD), 132–133 (TT), lysine 145, and lysine 154 each bind NAD(+). 3 residues coordinate Zn(2+): glutamate 187, histidine 249, and histidine 267.

Belongs to the sugar phosphate cyclases superfamily. Dehydroquinate synthase family. It depends on Co(2+) as a cofactor. Zn(2+) is required as a cofactor. The cofactor is NAD(+).

The protein resides in the cytoplasm. It catalyses the reaction 7-phospho-2-dehydro-3-deoxy-D-arabino-heptonate = 3-dehydroquinate + phosphate. It functions in the pathway metabolic intermediate biosynthesis; chorismate biosynthesis; chorismate from D-erythrose 4-phosphate and phosphoenolpyruvate: step 2/7. In terms of biological role, catalyzes the conversion of 3-deoxy-D-arabino-heptulosonate 7-phosphate (DAHP) to dehydroquinate (DHQ). In Paracoccus denitrificans (strain Pd 1222), this protein is 3-dehydroquinate synthase.